Consider the following 88-residue polypeptide: Selenoprotein W (88 aa).

Residues cysteine 10–selenocysteine 13 constitute a cross-link (cysteinyl-selenocysteine (Cys-Sec); redox-active). Selenocysteine 13 is a non-standard amino acid (selenocysteine). Position 37 is an S-glutathionyl cysteine (cysteine 37).

The protein belongs to the SelWTH family. Selenoprotein W subfamily. As to quaternary structure, interacts with DPYSL2, PRDX1, YWHAB, YWHAG, HSP70 and HSP90. As to expression, in the embryo, expressed in the developing nervous system and in mesoderm-derived tissues such as heart and limbs. In the adult, predominantly expressed in brain, skeletal muscle and heart.

It localises to the cytoplasm. Functionally, plays a role as a glutathione (GSH)-dependent antioxidant. May be involved in a redox-related process. May play a role in the myopathies of selenium deficiency. The protein is Selenoprotein W of Mus musculus (Mouse).